The chain runs to 230 residues: Triosephosphate isomerase (230 aa).

Asn9–Lys11 lines the substrate pocket. Residue His93 is the Electrophile of the active site. Glu141 functions as the Proton acceptor in the catalytic mechanism. Residues Ile146, Gly180, and Ala201–Ser202 each bind substrate.

Belongs to the triosephosphate isomerase family. In terms of assembly, homotetramer; dimer of dimers.

The protein resides in the cytoplasm. The catalysed reaction is D-glyceraldehyde 3-phosphate = dihydroxyacetone phosphate. Its pathway is carbohydrate biosynthesis; gluconeogenesis. It participates in carbohydrate degradation; glycolysis; D-glyceraldehyde 3-phosphate from glycerone phosphate: step 1/1. Functionally, involved in the gluconeogenesis. Catalyzes stereospecifically the conversion of dihydroxyacetone phosphate (DHAP) to D-glyceraldehyde-3-phosphate (G3P). This is Triosephosphate isomerase from Sulfolobus acidocaldarius (strain ATCC 33909 / DSM 639 / JCM 8929 / NBRC 15157 / NCIMB 11770).